Here is an 89-residue protein sequence, read N- to C-terminus: MAHKKAGGSSRNGRDSAGRRLGVKKFGGQDVIGGNIIVRQRGTKVYPGVNVGMGKDHTLFATADGRVRFHDGKLGRKYVSVDMMAEAAE.

Residues 1-22 (MAHKKAGGSSRNGRDSAGRRLG) form a disordered region.

It belongs to the bacterial ribosomal protein bL27 family.

This chain is Large ribosomal subunit protein bL27, found in Sphingopyxis alaskensis (strain DSM 13593 / LMG 18877 / RB2256) (Sphingomonas alaskensis).